The chain runs to 239 residues: Large ribosomal subunit protein uL30 (239 aa).

The segment at 1–22 is disordered; the sequence is MEGVMSEAPQSSIRKKEYEARM.

It belongs to the universal ribosomal protein uL30 family.

This is Large ribosomal subunit protein uL30 (RPL7) from Encephalitozoon cuniculi (strain GB-M1) (Microsporidian parasite).